Reading from the N-terminus, the 372-residue chain is Partitioning defective 6 homolog beta (372 aa).

Ser11 bears the Phosphoserine mark. The PB1 domain occupies 16-96 (TMEVKSKFGA…PLLRIFIQKK (81 aa)). Positions 126-253 (RKKPHIVISM…ITVRPANQRN (128 aa)) are interaction with PARD3 and CDC42. One can recognise a Pseudo-CRIB domain in the interval 133 to 150 (ISMPQDFRPVSSIIDVDI). The region spanning 157 to 250 (RVRLYKYGTE…NLIITVRPAN (94 aa)) is the PDZ domain. The span at 253-272 (NNVVRNSRTSGSSGQSTDNS) shows a compositional bias: polar residues. The segment at 253–292 (NNVVRNSRTSGSSGQSTDNSLLGYPQQIEPSFEPEDEDSE) is disordered.

Belongs to the PAR6 family. Interacts with PARD3. Interacts with GTP-bound forms of CDC42 and RAC1. Interacts with GTP-bound RHOQ/TC10. Interacts with PALS1. Interacts with the N-terminal part of PRKCI and PRKCZ. Part of a complex with PARD3, CDC42 or RAC1 and PRKCI or PRKCZ. Part of a complex with LLGL1 and PRKCI. Interacts with PARD3B. Interacts with ECT2. As to expression, expressed in pancreas and in both adult and fetal kidney. Weakly expressed in placenta and lung. Not expressed in other tissues.

It is found in the cytoplasm. The protein resides in the cell membrane. The protein localises to the cell junction. It localises to the tight junction. Functionally, adapter protein involved in asymmetrical cell division and cell polarization processes. Probably involved in formation of epithelial tight junctions. Association with PARD3 may prevent the interaction of PARD3 with F11R/JAM1, thereby preventing tight junction assembly. The PARD6-PARD3 complex links GTP-bound Rho small GTPases to atypical protein kinase C proteins. In Homo sapiens (Human), this protein is Partitioning defective 6 homolog beta (PARD6B).